The primary structure comprises 62 residues: Photosystem II reaction center protein Z (62 aa).

Helical transmembrane passes span 8–28 (VLTA…VAYA) and 41–61 (YVGS…NFLV).

The protein belongs to the PsbZ family. In terms of assembly, PSII is composed of 1 copy each of membrane proteins PsbA, PsbB, PsbC, PsbD, PsbE, PsbF, PsbH, PsbI, PsbJ, PsbK, PsbL, PsbM, PsbT, PsbX, PsbY, PsbZ, Psb30/Ycf12, peripheral proteins PsbO, CyanoQ (PsbQ), PsbU, PsbV and a large number of cofactors. It forms dimeric complexes.

Its subcellular location is the cellular thylakoid membrane. May control the interaction of photosystem II (PSII) cores with the light-harvesting antenna, regulates electron flow through the 2 photosystem reaction centers. PSII is a light-driven water plastoquinone oxidoreductase, using light energy to abstract electrons from H(2)O, generating a proton gradient subsequently used for ATP formation. The sequence is that of Photosystem II reaction center protein Z from Crocosphaera subtropica (strain ATCC 51142 / BH68) (Cyanothece sp. (strain ATCC 51142)).